Reading from the N-terminus, the 321-residue chain is Glutaminase (321 aa).

Residues Ser69, Asn120, Glu165, Asn172, Tyr196, Tyr248, and Val266 each contribute to the substrate site.

The protein belongs to the glutaminase family. As to quaternary structure, homotetramer.

The enzyme catalyses L-glutamine + H2O = L-glutamate + NH4(+). The polypeptide is Glutaminase (Bacteroides thetaiotaomicron (strain ATCC 29148 / DSM 2079 / JCM 5827 / CCUG 10774 / NCTC 10582 / VPI-5482 / E50)).